A 247-amino-acid polypeptide reads, in one-letter code: MDAFIRFTNQTQGRDRLFRATQYTCMLLRYLLEPKADNEKVVMKLKKLESSVSTGRKWFRLGNVVHALQATQQSVRATDLVPRICLTLASLNRVIYFICDTVLFVRSTGLASGVNKEKWRRWAARYYYYSLLLSLVRDLYEVSLQMKQVAHDRAKREKSPSQDTLGYSVADEETEWLQSLLLLLFHSLKRHPPLFLDTVKNFCDILNPLDQLGIYKSNPGIIGLGGLVSSVAGIITVAYPQMKLKTQ.

Residues 1–83 lie on the Cytoplasmic side of the membrane; sequence MDAFIRFTNQ…SVRATDLVPR (83 aa). The helical transmembrane segment at 84–105 threads the bilayer; sequence ICLTLASLNRVIYFICDTVLFV. Residues 106–219 lie on the Lumenal side of the membrane; the sequence is RSTGLASGVN…DQLGIYKSNP (114 aa). The helical transmembrane segment at 220–239 threads the bilayer; the sequence is GIIGLGGLVSSVAGIITVAY. Residues 220 to 239 form a required for homodimerization, interaction with PEX11G, and peroxisomal localization region; that stretch reads GIIGLGGLVSSVAGIITVAY. The Cytoplasmic segment spans residues 240 to 247; sequence PQMKLKTQ.

It belongs to the peroxin-11 family. In terms of assembly, homodimer. Heterodimer with PEX11G. Probably interacts with COPB2 and COPA. Interacts with PEX19. Interacts with FIS1.

The protein localises to the peroxisome membrane. May be involved in peroxisomal proliferation and may regulate peroxisomes division. May mediate binding of coatomer proteins to the peroxisomal membrane. Promotes membrane protrusion and elongation on the peroxisomal surface. The protein is Peroxisomal membrane protein 11A (PEX11A) of Bos taurus (Bovine).